Reading from the N-terminus, the 328-residue chain is Sin3 histone deacetylase corepressor complex component SDS3 (328 aa).

The disordered stretch occupies residues 1 to 64 (MSAAALLAPA…TDLAKHDEED (64 aa)). At S2 the chain carries N-acetylserine. A mediates interaction with USP17L2 region spans residues 2-170 (SAAALLAPAP…IENEKLTMEL (169 aa)). Residues 10 to 21 (APAPAGAPPAPE) are compositionally biased toward pro residues. 2 stretches are compositionally biased toward acidic residues: residues 23–37 (YPEEDEELESAEDDE) and 45–54 (SDEDTEDASE). S32 and S45 each carry phosphoserine. T49 is subject to Phosphothreonine. A Phosphoserine modification is found at S53. A coiled-coil region spans residues 64–171 (DFVEMKEQMY…ENEKLTMELT (108 aa)). Glycyl lysine isopeptide (Lys-Gly) (interchain with G-Cter in SUMO2) cross-links involve residues K69, K178, and K201. Residues 226-252 (LKSPKRPASPSSPEHLPTTPAESPAQR) are disordered. 3 positions are modified to phosphoserine: S228, S234, and S237. T244 is subject to Phosphothreonine.

The protein belongs to the SDS3 family. In terms of assembly, homodimer. Component of the SIN3 histone deacetylase (HDAC) corepressor complex. Interacts with SIN3A. Interaction with SIN3B enhances the interaction between SIN3B and HDAC1 to form a complex. Interacts with HCFC1. Component of a mSin3A corepressor complex that contains SIN3A, SAP130, SUDS3/SAP45, ARID4B/SAP180, HDAC1 and HDAC2. Interacts with USP17L2; the interaction is direct. Interacts with FOXK2. Post-translationally, polyubiquitinated. 'Lys-63'-polyubiquitinated SUDS3 positively regulates histone deacetylation. Regulated through deubiquitination by USP17L2/USP17 that cleaves 'Lys-63'-linked ubiquitin chains.

It is found in the nucleus. Functionally, regulatory protein which represses transcription and augments histone deacetylase activity of HDAC1. May have a potential role in tumor suppressor pathways through regulation of apoptosis. May function in the assembly and/or enzymatic activity of the mSin3A corepressor complex or in mediating interactions between the complex and other regulatory complexes. The protein is Sin3 histone deacetylase corepressor complex component SDS3 (SUDS3) of Bos taurus (Bovine).